Reading from the N-terminus, the 157-residue chain is Mannose-specific lectin (157 aa).

The or 23; in 70% of the molecules signal peptide spans 1–19 (MAKASLLILAAIFLGVITP). A Bulb-type lectin domain is found at 24-132 (DNILYSGETL…DRWATGTHTG (109 aa)). Residues Q49, D51, N53, Y57, D60, K61, W64, A65, N67, Q80, D82, N84, Y88, I95, W96, N99, N106, Q112, D114, N116, Y120, and W125 each coordinate alpha-D-mannopyranose. C52 and C75 are disulfide-bonded. Positions 129-157 (THTGLVGIPASPPSEKYPTAGKIKLVTAK) are cleaved as a propeptide — removed in mature form.

As to quaternary structure, homotetramer.

The protein resides in the secreted. In terms of biological role, mannose-specific lectin which binds alpha-D-linked mannose. Displays a high affinity for alpha-(1-3)-mannose oligomers. Displays antiviral activity and therefore may contribute to defense against infections. The protein is Mannose-specific lectin of Galanthus nivalis (Common snowdrop).